The primary structure comprises 325 residues: GMP reductase (325 aa).

C173 (thioimidate intermediate) is an active-site residue. 202–225 is a binding site for NADP(+); sequence IIADGGIRSHGDIAKSVRFGATMV.

The protein belongs to the IMPDH/GMPR family. GuaC type 2 subfamily.

It carries out the reaction IMP + NH4(+) + NADP(+) = GMP + NADPH + 2 H(+). In terms of biological role, catalyzes the irreversible NADPH-dependent deamination of GMP to IMP. It functions in the conversion of nucleobase, nucleoside and nucleotide derivatives of G to A nucleotides, and in maintaining the intracellular balance of A and G nucleotides. This is GMP reductase from Delftia acidovorans (strain DSM 14801 / SPH-1).